The following is a 405-amino-acid chain: MTIDTRALGFGSSERAVYAADPWTTRGRLYQEDGSPTRSDFQRDRDRIVHTTAFRRLKHKTQVFIAQDGDHYRTRLTHTIEVAQIARALARALKLDEDLAEGVALVHDFGHTPFGHTGEDALHEVLLPYGGFDHNAQSLRIVTKLERRYAEFDGINLTWESLEGLVKHNGPLLTADGVGTRGPVPQPILDYCELHDLELATYASLEAQVAAIADDIAYNTHDIDDGLRSGYLTFDMLEEIPFLAGLMAEVRARYPHLEPSRFTHEIMRRQITRMVEDVIGVAQQRLSLLRPESAADIRAADRVIATFSEGMAETDRQIKAMLFKRIYRNPDIMRIRAGAAQIVTDLFAAYMANPKEMQSHYWVDHIAGLSDAPKARHVGDYLAGMTDTYAISAHRRLFDHTPDLR.

The region spanning 75–219 (RLTHTIEVAQ…AAIADDIAYN (145 aa)) is the HD domain.

Belongs to the dGTPase family. Type 2 subfamily.

The protein is Deoxyguanosinetriphosphate triphosphohydrolase-like protein of Rhizobium johnstonii (strain DSM 114642 / LMG 32736 / 3841) (Rhizobium leguminosarum bv. viciae).